The primary structure comprises 173 residues: Shikimate kinase 2 (173 aa).

Position 12-17 (12-17) interacts with ATP; that stretch reads GCGKTT. Mg(2+) contacts are provided by Thr16 and Asp32. The substrate site is built by Asp34, Arg58, and Gly79. An LID domain region spans residues 112–126; that stretch reads EENPQDNQRPTLTGR. An ATP-binding site is contributed by Arg120. Arg139 serves as a coordination point for substrate. Residue Gln155 coordinates ATP.

It belongs to the shikimate kinase family. AroL subfamily. As to quaternary structure, monomer. It depends on Mg(2+) as a cofactor.

It is found in the cytoplasm. The enzyme catalyses shikimate + ATP = 3-phosphoshikimate + ADP + H(+). It functions in the pathway metabolic intermediate biosynthesis; chorismate biosynthesis; chorismate from D-erythrose 4-phosphate and phosphoenolpyruvate: step 5/7. In terms of biological role, catalyzes the specific phosphorylation of the 3-hydroxyl group of shikimic acid using ATP as a cosubstrate. The sequence is that of Shikimate kinase 2 from Pectobacterium atrosepticum (strain SCRI 1043 / ATCC BAA-672) (Erwinia carotovora subsp. atroseptica).